A 332-amino-acid polypeptide reads, in one-letter code: 6-phosphogluconolactonase (332 aa).

This sequence belongs to the cycloisomerase 2 family.

The catalysed reaction is 6-phospho-D-glucono-1,5-lactone + H2O = 6-phospho-D-gluconate + H(+). It participates in carbohydrate degradation; pentose phosphate pathway; D-ribulose 5-phosphate from D-glucose 6-phosphate (oxidative stage): step 2/3. In terms of biological role, catalyzes the hydrolysis of 6-phosphogluconolactone to 6-phosphogluconate. This Pectobacterium atrosepticum (strain SCRI 1043 / ATCC BAA-672) (Erwinia carotovora subsp. atroseptica) protein is 6-phosphogluconolactonase.